The sequence spans 264 residues: Indole-3-glycerol phosphate synthase (264 aa).

Belongs to the TrpC family.

The enzyme catalyses 1-(2-carboxyphenylamino)-1-deoxy-D-ribulose 5-phosphate + H(+) = (1S,2R)-1-C-(indol-3-yl)glycerol 3-phosphate + CO2 + H2O. It participates in amino-acid biosynthesis; L-tryptophan biosynthesis; L-tryptophan from chorismate: step 4/5. The chain is Indole-3-glycerol phosphate synthase from Albidiferax ferrireducens (strain ATCC BAA-621 / DSM 15236 / T118) (Rhodoferax ferrireducens).